A 507-amino-acid polypeptide reads, in one-letter code: Probable cytosol aminopeptidase (507 aa).

2 residues coordinate Mn(2+): K269 and D274. K281 is a catalytic residue. Mn(2+)-binding residues include D292, D351, and E353. Residue R355 is part of the active site.

Belongs to the peptidase M17 family. It depends on Mn(2+) as a cofactor.

It localises to the cytoplasm. It catalyses the reaction Release of an N-terminal amino acid, Xaa-|-Yaa-, in which Xaa is preferably Leu, but may be other amino acids including Pro although not Arg or Lys, and Yaa may be Pro. Amino acid amides and methyl esters are also readily hydrolyzed, but rates on arylamides are exceedingly low.. The catalysed reaction is Release of an N-terminal amino acid, preferentially leucine, but not glutamic or aspartic acids.. Presumably involved in the processing and regular turnover of intracellular proteins. Catalyzes the removal of unsubstituted N-terminal amino acids from various peptides. This Chromohalobacter salexigens (strain ATCC BAA-138 / DSM 3043 / CIP 106854 / NCIMB 13768 / 1H11) protein is Probable cytosol aminopeptidase.